Consider the following 489-residue polypeptide: Glycogen synthase (489 aa).

Lys18 contributes to the ADP-alpha-D-glucose binding site.

It belongs to the glycosyltransferase 1 family. Bacterial/plant glycogen synthase subfamily.

The catalysed reaction is [(1-&gt;4)-alpha-D-glucosyl](n) + ADP-alpha-D-glucose = [(1-&gt;4)-alpha-D-glucosyl](n+1) + ADP + H(+). It functions in the pathway glycan biosynthesis; glycogen biosynthesis. In terms of biological role, synthesizes alpha-1,4-glucan chains using ADP-glucose. The chain is Glycogen synthase from Rhodopseudomonas palustris (strain BisB18).